A 350-amino-acid chain; its full sequence is tRNA N6-adenosine threonylcarbamoyltransferase (350 aa).

Residues His109 and His113 each coordinate Fe cation. Substrate-binding positions include 136–140, Asp169, Gly182, Asp186, and Asn284; that span reads TVSGG. A Fe cation-binding site is contributed by Asp312.

The protein belongs to the KAE1 / TsaD family. Fe(2+) serves as cofactor.

Its subcellular location is the cytoplasm. It carries out the reaction L-threonylcarbamoyladenylate + adenosine(37) in tRNA = N(6)-L-threonylcarbamoyladenosine(37) in tRNA + AMP + H(+). Functionally, required for the formation of a threonylcarbamoyl group on adenosine at position 37 (t(6)A37) in tRNAs that read codons beginning with adenine. Is involved in the transfer of the threonylcarbamoyl moiety of threonylcarbamoyl-AMP (TC-AMP) to the N6 group of A37, together with TsaE and TsaB. TsaD likely plays a direct catalytic role in this reaction. The protein is tRNA N6-adenosine threonylcarbamoyltransferase of Chlorobium chlorochromatii (strain CaD3).